The sequence spans 397 residues: Flavohemoprotein (397 aa).

The Globin domain maps to S4–A140. H87 contacts heme b. Catalysis depends on charge relay system residues Y97 and E139. The tract at residues G151–A397 is reductase. Positions I154–P258 constitute an FAD-binding FR-type domain. Residues Y192 and R207 to S210 each bind FAD. Residue G271–P276 participates in NADP(+) binding. An FAD-binding site is contributed by F387–P390.

This sequence belongs to the globin family. Two-domain flavohemoproteins subfamily. It in the C-terminal section; belongs to the flavoprotein pyridine nucleotide cytochrome reductase family. Requires heme b as cofactor. FAD is required as a cofactor.

The enzyme catalyses 2 nitric oxide + NADPH + 2 O2 = 2 nitrate + NADP(+) + H(+). It carries out the reaction 2 nitric oxide + NADH + 2 O2 = 2 nitrate + NAD(+) + H(+). Functionally, is involved in NO detoxification in an aerobic process, termed nitric oxide dioxygenase (NOD) reaction that utilizes O(2) and NAD(P)H to convert NO to nitrate, which protects the bacterium from various noxious nitrogen compounds. Therefore, plays a central role in the inducible response to nitrosative stress. The sequence is that of Flavohemoprotein from Xylella fastidiosa (strain Temecula1 / ATCC 700964).